The following is a 369-amino-acid chain: Outer membrane porin F (369 aa).

The N-terminal stretch at 1–21 is a signal peptide; sequence MKRNILAVVIPALLVAGTANA. A beta stranded membrane pass occupies residues 22-27; that stretch reads AEIFNK. Residue Asp-28 is a topological domain, periplasmic. Residues 29–44 form a beta stranded membrane-spanning segment; the sequence is GNKLDLYGKVDVRHQF. The Extracellular portion of the chain corresponds to 45–55; the sequence is ADKRSSEDGDD. The chain crosses the membrane as a beta stranded span at residues 56-68; it reads SYARIGIKGETQI. Over 69–70 the chain is Periplasmic; sequence SD. The beta stranded transmembrane segment at 71–83 threads the bilayer; sequence QLTGFGRWEYNVK. At 84–97 the chain is on the extracellular side; it reads AKGTEAAVAESSTR. Residues 98-106 form a beta stranded membrane-spanning segment; sequence LAFAGLKFA. At 107–108 the chain is on the periplasmic side; that stretch reads NY. A beta stranded membrane pass occupies residues 109 to 115; the sequence is GSLDYGR. Residues 116 to 150 lie on the Extracellular side of the membrane; sequence NYGVNYDVNAWTDVLPIFGGDAMAQTDNFMTGRST. A beta stranded transmembrane segment spans residues 151–157; that stretch reads GLLTYRN. The Periplasmic portion of the chain corresponds to 158–165; that stretch reads TDFFGLVD. Residues 166–177 traverse the membrane as a beta stranded segment; that stretch reads GLNFALQYQGQN. Residues 178–193 are Extracellular-facing; the sequence is SDRTKNKGRDTERSNG. Residues 194 to 204 form a beta stranded membrane-spanning segment; that stretch reads DGYGLSSTYDV. Topologically, residues 205-206 are periplasmic; the sequence is GY. Residues 207–219 traverse the membrane as a beta stranded segment; that stretch reads GITVGGSYANSAR. Residues 220-234 are Extracellular-facing; sequence TADQKEKVSDAYGKR. The beta stranded transmembrane segment at 235-246 threads the bilayer; sequence AEAWNIGAKYDA. Position 247 (Asn-247) is a topological domain, periplasmic. The beta stranded transmembrane segment at 248-259 threads the bilayer; it reads NVYLAAMYGETR. The Extracellular segment spans residues 260–278; that stretch reads NMTRYTRTIADTDATLIAN. A beta stranded transmembrane segment spans residues 279–291; sequence KTQNIELTAQYLF. The Periplasmic segment spans residues 292–294; the sequence is SDL. Residues 295 to 308 form a beta stranded membrane-spanning segment; the sequence is GLKPSLAYVQSKGK. The Extracellular segment spans residues 309 to 320; the sequence is DLTEGKGFNGDL. A beta stranded transmembrane segment spans residues 321–332; it reads VKYVSVGTYYYF. Residues 333 to 334 are Periplasmic-facing; that stretch reads NK. The beta stranded transmembrane segment at 335–344 threads the bilayer; the sequence is NLSTYVDYKI. Topologically, residues 345–359 are extracellular; sequence NLLKKDNELGVNARN. The chain crosses the membrane as a beta stranded span at residues 360–369; that stretch reads VFGVGLTYQF.

This sequence belongs to the Gram-negative porin family. As to quaternary structure, homotrimer.

Its subcellular location is the cell outer membrane. Forms pores that allow passive diffusion of small molecules across the outer membrane. In Xenorhabdus nematophila (strain ATCC 19061 / DSM 3370 / CCUG 14189 / LMG 1036 / NCIMB 9965 / AN6), this protein is Outer membrane porin F (ompF).